Here is a 207-residue protein sequence, read N- to C-terminus: MTAHNPVQGTLPRSNEEIAARVKAMEAILVDKGLISTDAIDHMSSVYENEVGPQLGAKIVARAWVDPEFKQRLLTDATSACREMGVGGMQGEEMVVLENTGTVHNMVVCTLCSCYPWPVLGLPPNWYKYPAYRARAVRDPRGVLAEFGYTPDPDVEIRIWDSSAELRYWVLPQRPAGTENFTEEQLADLVTRDSLIGVSVPTTPSKA.

Residues C109, C112, S113, and C114 each contribute to the Co(3+) site.

It belongs to the nitrile hydratase subunit alpha family. In terms of assembly, heterodimer of an alpha and a beta chain. It depends on Co(3+) as a cofactor.

It catalyses the reaction an aliphatic primary amide = an aliphatic nitrile + H2O. Its function is as follows. NHase catalyzes the hydration of various nitrile compounds to the corresponding amides. In Rhodococcus rhodochrous, this protein is Low-molecular weight cobalt-containing nitrile hydratase subunit alpha.